The primary structure comprises 80 residues: RNA-binding protein KhpA (80 aa).

Positions 33–80 constitute a KH domain; it reads GRTVEVHVHPDDLGKVIGRGGRTATALRKLVAGIGGRGIRVDVVDTDQ.

It belongs to the KhpA RNA-binding protein family.

It is found in the cytoplasm. In terms of biological role, a probable RNA-binding protein. This chain is RNA-binding protein KhpA, found in Mycobacterium leprae (strain TN).